We begin with the raw amino-acid sequence, 160 residues long: Ribosomal RNA large subunit methyltransferase H (160 aa).

The S-adenosyl-L-methionine site is built by Leu76 and Gly108.

Belongs to the RNA methyltransferase RlmH family. As to quaternary structure, homodimer.

It localises to the cytoplasm. The catalysed reaction is pseudouridine(1915) in 23S rRNA + S-adenosyl-L-methionine = N(3)-methylpseudouridine(1915) in 23S rRNA + S-adenosyl-L-homocysteine + H(+). In terms of biological role, specifically methylates the pseudouridine at position 1915 (m3Psi1915) in 23S rRNA. This Bradyrhizobium diazoefficiens (strain JCM 10833 / BCRC 13528 / IAM 13628 / NBRC 14792 / USDA 110) protein is Ribosomal RNA large subunit methyltransferase H.